Reading from the N-terminus, the 165-residue chain is Chorismate pyruvate-lyase (165 aa).

4 residues coordinate substrate: M35, R77, L115, and E156.

Belongs to the UbiC family. As to quaternary structure, monomer.

The protein localises to the cytoplasm. It carries out the reaction chorismate = 4-hydroxybenzoate + pyruvate. It functions in the pathway cofactor biosynthesis; ubiquinone biosynthesis. Its function is as follows. Removes the pyruvyl group from chorismate, with concomitant aromatization of the ring, to provide 4-hydroxybenzoate (4HB) for the ubiquinone pathway. This chain is Chorismate pyruvate-lyase, found in Escherichia coli O127:H6 (strain E2348/69 / EPEC).